The sequence spans 210 residues: Keratin-associated protein 4-9 (210 aa).

Tandem repeats lie at residues Cys-24–Ser-28, Cys-29–Thr-33, Cys-34–Thr-38, Cys-39–Ser-43, Cys-44–Ser-48, Cys-49–Gln-53, Cys-54–Val-58, Cys-59–Thr-63, Cys-69–Thr-73, Cys-74–Thr-78, Cys-84–Ser-88, Cys-89–Gln-93, Cys-94–Ala-98, Cys-99–Thr-103, Cys-104–Ser-108, Cys-109–Thr-113, Cys-114–Arg-118, Cys-119–Ser-123, Cys-124–Ser-128, Cys-129–Ser-133, Cys-134–Gln-138, Cys-139–Val-143, Cys-144–Asn-148, Cys-149–Ser-153, Cys-159–Ser-163, Cys-164–Ser-168, Cys-169–Cys-173, and Cys-174–Pro-178. Residues Cys-24 to Pro-178 are 29 X 5 AA repeats of C-C-[RQVHIEK]-[SPTR]-[VSTQCRNP].

Belongs to the KRTAP type 4 family. In terms of assembly, interacts with hair keratins. In terms of tissue distribution, expressed in the hair follicles.

In terms of biological role, in the hair cortex, hair keratin intermediate filaments are embedded in an interfilamentous matrix, consisting of hair keratin-associated proteins (KRTAP), which are essential for the formation of a rigid and resistant hair shaft through their extensive disulfide bond cross-linking with abundant cysteine residues of hair keratins. The matrix proteins include the high-sulfur and high-glycine-tyrosine keratins. The polypeptide is Keratin-associated protein 4-9 (KRTAP4-9) (Homo sapiens (Human)).